The following is a 208-amino-acid chain: Large ribosomal subunit protein bL25 (208 aa).

It belongs to the bacterial ribosomal protein bL25 family. CTC subfamily. As to quaternary structure, part of the 50S ribosomal subunit; part of the 5S rRNA/L5/L18/L25 subcomplex. Contacts the 5S rRNA. Binds to the 5S rRNA independently of L5 and L18.

This is one of the proteins that binds to the 5S RNA in the ribosome where it forms part of the central protuberance. This is Large ribosomal subunit protein bL25 from Burkholderia thailandensis (strain ATCC 700388 / DSM 13276 / CCUG 48851 / CIP 106301 / E264).